Reading from the N-terminus, the 460-residue chain is Nuclear transport factor 2 (460 aa).

In terms of domain architecture, NTF2 spans 15–131 (VGRAFVEQYY…YFVLNDVFRF (117 aa)). 3 disordered regions span residues 207–226 (EPPT…GDAP), 238–289 (KSSP…VDVE), and 361–460 (RQAV…GGSS). The RRM domain maps to 293 to 370 (HSIYVRNLPF…RQAVVEEKKT (78 aa)). Gly residues predominate over residues 373-382 (RGGGNNGGSR). Over residues 383–394 (GRYFSGRGSFRN) the composition is skewed to low complexity. Composition is skewed to gly residues over residues 399-416 (GGRG…GGEF) and 450-460 (GRGGARGGGSS).

As to quaternary structure, interacts with MBD6.

It is found in the cytoplasm. The protein resides in the nucleus. Functionally, involved in RNA-directed DNA methylation (RdDM). The protein is Nuclear transport factor 2 of Arabidopsis thaliana (Mouse-ear cress).